The primary structure comprises 349 residues: Small ribosomal subunit protein eS6 (349 aa).

The disordered stretch occupies residues 224-349 (RRRSRLSSMR…AKKEKKQKKK (126 aa)). Basic and acidic residues-rich tracts occupy residues 231-251 (SMRD…EKAA) and 260-334 (KKEA…EAAK).

It belongs to the eukaryotic ribosomal protein eS6 family. Component of the small ribosomal subunit. Part of the small subunit (SSU) processome, composed of more than 70 proteins and the RNA chaperone small nucleolar RNA (snoRNA) U3. In terms of processing, ribosomal protein S6 is the major substrate of protein kinases in eukaryote ribosomes.

It is found in the cytoplasm. The protein localises to the nucleus. The protein resides in the nucleolus. Component of the 40S small ribosomal subunit. Plays an important role in controlling cell growth and proliferation through the selective translation of particular classes of mRNA. Part of the small subunit (SSU) processome, first precursor of the small eukaryotic ribosomal subunit. During the assembly of the SSU processome in the nucleolus, many ribosome biogenesis factors, an RNA chaperone and ribosomal proteins associate with the nascent pre-rRNA and work in concert to generate RNA folding, modifications, rearrangements and cleavage as well as targeted degradation of pre-ribosomal RNA by the RNA exosome. The chain is Small ribosomal subunit protein eS6 (RpS6) from Aedes albopictus (Asian tiger mosquito).